Reading from the N-terminus, the 111-residue chain is MKNYDPNIRWGLHTIKVSFQRGVYKGFVTFVKSGNCKGLDVLGIDEEDLYDMKFKENPINFRLLGEDDNGDEWFAMTLKNDKKDELLVEDVWEELSEYIVRIEIIDFEEEK.

This is an uncharacterized protein from Enterococcus faecalis (strain ATCC 700802 / V583).